We begin with the raw amino-acid sequence, 135 residues long: Retinol-binding protein 1 (135 aa).

The interval Arg22 to Lys32 is important for interaction with STRA6. Residues Lys41, Met63, and Gln109 each coordinate all-trans-retinol.

It belongs to the calycin superfamily. Fatty-acid binding protein (FABP) family. Interacts (only as retinol-free apoprotein) with STRA6.

It is found in the cytoplasm. Its subcellular location is the lipid droplet. Cytoplasmic retinol-binding protein. Accepts retinol from the transport protein STRA6, and thereby contributes to retinol uptake, storage and retinoid homeostasis. This chain is Retinol-binding protein 1 (Rbp1), found in Mus musculus (Mouse).